The primary structure comprises 483 residues: Cobyric acid synthase (483 aa).

The region spanning 251-438 is the GATase cobBQ-type domain; that stretch reads SLVVAVPMLP…LHGVFNADEF (188 aa). The Nucleophile role is filled by Cys333. His430 is a catalytic residue.

The protein belongs to the CobB/CobQ family. CobQ subfamily.

The protein operates within cofactor biosynthesis; adenosylcobalamin biosynthesis. In terms of biological role, catalyzes amidations at positions B, D, E, and G on adenosylcobyrinic A,C-diamide. NH(2) groups are provided by glutamine, and one molecule of ATP is hydrogenolyzed for each amidation. The chain is Cobyric acid synthase from Brucella anthropi (strain ATCC 49188 / DSM 6882 / CCUG 24695 / JCM 21032 / LMG 3331 / NBRC 15819 / NCTC 12168 / Alc 37) (Ochrobactrum anthropi).